We begin with the raw amino-acid sequence, 170 residues long: Der GTPase-activating protein YihI (170 aa).

Disordered stretches follow at residues 1–96 and 145–170; these read MKKP…LSPQ and LSYD…RGGN. A compositionally biased stretch (basic and acidic residues) spans 20 to 30; sequence TREELNQEARD. The segment covering 31-40 has biased composition (basic residues); sequence RKRLKKHRGH. Positions 147 to 159 are enriched in acidic residues; that stretch reads YDDEEDEEEDEKQ.

This sequence belongs to the YihI family. As to quaternary structure, interacts with Der.

Functionally, a GTPase-activating protein (GAP) that modifies Der/EngA GTPase function. May play a role in ribosome biogenesis. The polypeptide is Der GTPase-activating protein YihI (Salmonella arizonae (strain ATCC BAA-731 / CDC346-86 / RSK2980)).